The chain runs to 169 residues: Crossover junction endodeoxyribonuclease RuvC (169 aa).

Residues Asp12, Glu72, and Asp144 contribute to the active site. Asp12, Glu72, and Asp144 together coordinate Mg(2+).

The protein belongs to the RuvC family. In terms of assembly, homodimer which binds Holliday junction (HJ) DNA. The HJ becomes 2-fold symmetrical on binding to RuvC with unstacked arms; it has a different conformation from HJ DNA in complex with RuvA. In the full resolvosome a probable DNA-RuvA(4)-RuvB(12)-RuvC(2) complex forms which resolves the HJ. The cofactor is Mg(2+).

It is found in the cytoplasm. It catalyses the reaction Endonucleolytic cleavage at a junction such as a reciprocal single-stranded crossover between two homologous DNA duplexes (Holliday junction).. The RuvA-RuvB-RuvC complex processes Holliday junction (HJ) DNA during genetic recombination and DNA repair. Endonuclease that resolves HJ intermediates. Cleaves cruciform DNA by making single-stranded nicks across the HJ at symmetrical positions within the homologous arms, yielding a 5'-phosphate and a 3'-hydroxyl group; requires a central core of homology in the junction. The consensus cleavage sequence is 5'-(A/T)TT(C/G)-3'. Cleavage occurs on the 3'-side of the TT dinucleotide at the point of strand exchange. HJ branch migration catalyzed by RuvA-RuvB allows RuvC to scan DNA until it finds its consensus sequence, where it cleaves and resolves the cruciform DNA. This chain is Crossover junction endodeoxyribonuclease RuvC, found in Azorhizobium caulinodans (strain ATCC 43989 / DSM 5975 / JCM 20966 / LMG 6465 / NBRC 14845 / NCIMB 13405 / ORS 571).